Consider the following 119-residue polypeptide: Large ribosomal subunit protein bL20 (119 aa).

Belongs to the bacterial ribosomal protein bL20 family.

Its function is as follows. Binds directly to 23S ribosomal RNA and is necessary for the in vitro assembly process of the 50S ribosomal subunit. It is not involved in the protein synthesizing functions of that subunit. The protein is Large ribosomal subunit protein bL20 of Bacillus licheniformis (strain ATCC 14580 / DSM 13 / JCM 2505 / CCUG 7422 / NBRC 12200 / NCIMB 9375 / NCTC 10341 / NRRL NRS-1264 / Gibson 46).